Reading from the N-terminus, the 1099-residue chain is Carbamoyl phosphate synthase large chain (1099 aa).

Positions 1-402 (MPKREDIKRI…ALGKALRSLE (402 aa)) are carboxyphosphate synthetic domain. Residues arginine 129, arginine 169, glycine 175, glycine 176, glutamate 208, valine 210, glutamate 215, glycine 241, isoleucine 242, histidine 243, glutamine 285, and glutamate 299 each coordinate ATP. An ATP-grasp 1 domain is found at 133–328 (KETMEKAGLE…IAKVAALLAV (196 aa)). Residues glutamine 285, glutamate 299, and asparagine 301 each coordinate Mg(2+). Residues glutamine 285, glutamate 299, and asparagine 301 each contribute to the Mn(2+) site. Residues 403 to 541 (LDAAPKLDLE…STYNGVENEA (139 aa)) form an oligomerization domain region. Residues 542-944 (VPSDREKIMI…AFAKAQIAAG (403 aa)) form a carbamoyl phosphate synthetic domain region. The region spanning 666-857 (AKLLKQIGLK…VARIAAKIMV (192 aa)) is the ATP-grasp 2 domain. Residues arginine 702, lysine 741, leucine 743, glutamate 748, glycine 773, valine 774, histidine 775, serine 776, glutamine 816, and glutamate 828 each contribute to the ATP site. Mg(2+) contacts are provided by glutamine 816, glutamate 828, and asparagine 830. Mn(2+) is bound by residues glutamine 816, glutamate 828, and asparagine 830. Positions 945-1099 (NPLPTTGAIL…VRRLTDTWKM (155 aa)) constitute an MGS-like domain. The interval 945-1099 (NPLPTTGAIL…VRRLTDTWKM (155 aa)) is allosteric domain.

It belongs to the CarB family. As to quaternary structure, composed of two chains; the small (or glutamine) chain promotes the hydrolysis of glutamine to ammonia, which is used by the large (or ammonia) chain to synthesize carbamoyl phosphate. Tetramer of heterodimers (alpha,beta)4. Mg(2+) is required as a cofactor. It depends on Mn(2+) as a cofactor.

The catalysed reaction is hydrogencarbonate + L-glutamine + 2 ATP + H2O = carbamoyl phosphate + L-glutamate + 2 ADP + phosphate + 2 H(+). The enzyme catalyses hydrogencarbonate + NH4(+) + 2 ATP = carbamoyl phosphate + 2 ADP + phosphate + 2 H(+). The protein operates within amino-acid biosynthesis; L-arginine biosynthesis; carbamoyl phosphate from bicarbonate: step 1/1. It functions in the pathway pyrimidine metabolism; UMP biosynthesis via de novo pathway; (S)-dihydroorotate from bicarbonate: step 1/3. Large subunit of the glutamine-dependent carbamoyl phosphate synthetase (CPSase). CPSase catalyzes the formation of carbamoyl phosphate from the ammonia moiety of glutamine, carbonate, and phosphate donated by ATP, constituting the first step of 2 biosynthetic pathways, one leading to arginine and/or urea and the other to pyrimidine nucleotides. The large subunit (synthetase) binds the substrates ammonia (free or transferred from glutamine from the small subunit), hydrogencarbonate and ATP and carries out an ATP-coupled ligase reaction, activating hydrogencarbonate by forming carboxy phosphate which reacts with ammonia to form carbamoyl phosphate. This is Carbamoyl phosphate synthase large chain from Thermotoga maritima (strain ATCC 43589 / DSM 3109 / JCM 10099 / NBRC 100826 / MSB8).